A 310-amino-acid chain; its full sequence is Isoflavone reductase homolog A622 (310 aa).

NADP(+) contacts are provided by residues 13–19 (GGTGYIG), Arg-38, and Lys-47. The active-site Proton acceptor is the Lys-135. Arg-139 serves as a coordination point for NADP(+).

This sequence belongs to the NmrA-type oxidoreductase family. Isoflavone reductase subfamily. As to quaternary structure, monomer. Expressed in roots and stems.

Its subcellular location is the cytoplasm. It participates in alkaloid biosynthesis; nicotine biosynthesis. Functionally, NADPH-binding protein. Involved in the biosynthesis of pyridine alkaloid natural products, leading mainly to the production of anabasine, anatabine, nicotine and nornicotine, effective deterrents against herbivores with antiparasitic and pesticide properties (neurotoxins); nornicotine serves as the precursor in the synthesis of the carcinogen compound N'-nitrosonornicotine (NNN). Reductase involved in a late step of tobacco alkaloid biosynthesis. Triggers either the formation of a nicotinic acid-derived precursor or the final condensation reaction of tobacco alkaloids. The chain is Isoflavone reductase homolog A622 from Nicotiana sylvestris (Wood tobacco).